Reading from the N-terminus, the 125-residue chain is Glycine cleavage system H protein (125 aa).

The Lipoyl-binding domain maps to 19–101 (EVTVGITDHA…YHEGWLVKLK (83 aa)). Lys60 carries the N6-lipoyllysine modification.

The protein belongs to the GcvH family. As to quaternary structure, the glycine cleavage system is composed of four proteins: P, T, L and H. It depends on (R)-lipoate as a cofactor.

Its function is as follows. The glycine cleavage system catalyzes the degradation of glycine. The H protein shuttles the methylamine group of glycine from the P protein to the T protein. This Legionella pneumophila (strain Corby) protein is Glycine cleavage system H protein.